A 423-amino-acid polypeptide reads, in one-letter code: MSASAVFILDVKGKPLISRNYKGDVPMTEIDHFMPLLMQREEEGVLAPLLSHGRVHFLWIKHSNLYLVATTLKNANASLVYSFLYKTVEVFCEYFKELEEESIRDNFVIVYDLLDELMDFGFPQTTDSKILQEYITQQGNKLETGKSRVPPTVTNAVSWRSEGIKYKKNEVFIDVIESVNLLVNANGSVLLSEIVGTIKLKVFLSGMPELRLGLNDRVLFELTGRSKNKSVELEDVKFHQCVRLSRFDNDRTISFIPPDGDFELMSYRLSTQVKPLIWIESVIEKFSHSRVEIMVKAKGQFKKQSVANGVEISVPVPSDADSPRFKTSVGSAKYVPEKNVVIWSIKSFPGGKEYLMRAHFGLPSVETEEVEGRPPIGVKFEIPYFTVSGIQVRYMKIIEKSGYQALPWVRYITQSGDYQLRTS.

Residues 168 to 421 (KNEVFIDVIE…ITQSGDYQLR (254 aa)) enclose the MHD domain.

Belongs to the adaptor complexes medium subunit family. Adaptor protein complex 1 (AP-1) is a heterotetramer composed of two large adaptins (gamma-type subunit AP1G1 and beta-type subunit AP1B1), a medium adaptin (mu-type subunit AP1M1 or AP1M2) and a small adaptin (sigma-type subunit AP1S1 or AP1S2 or AP1S3). Interacts with P2X4. Phosphorylation of membrane-bound AP1M1/AP1M2 increases its affinity for sorting signals.

The protein resides in the golgi apparatus. The protein localises to the cytoplasmic vesicle. It is found in the clathrin-coated vesicle membrane. Subunit of clathrin-associated adaptor protein complex 1 that plays a role in protein sorting in the trans-Golgi network (TGN) and endosomes. The AP complexes mediate the recruitment of clathrin to membranes and the recognition of sorting signals within the cytosolic tails of transmembrane cargo molecules. The sequence is that of AP-1 complex subunit mu-2 (Ap1m2) from Mus musculus (Mouse).